A 648-amino-acid polypeptide reads, in one-letter code: Calpain-5 (648 aa).

A Calpain catalytic domain is found at 28–353; the sequence is PFVDTLFPPT…FTDISLCQLF (326 aa). Residues cysteine 83, histidine 252, and asparagine 290 contribute to the active site. A domain III region spans residues 354–509; that stretch reads NTSVFSFSRS…VYSDEHIHFS (156 aa). The region spanning 502–625 is the C2 domain; it reads SDEHIHFSPL…ENRDTTLQLT (124 aa).

The protein belongs to the peptidase C2 family. It depends on Ca(2+) as a cofactor. Expressed in neuronal, but not in GABA-ergic neurons, intestinal, hypodermal and excretory tissues.

Functionally, required for the correct female sexual development of the soma and germline in hermaphrodite animals, while being fully dispensable in males. Has calcium-dependent proteolytic activity and is involved in the cleavage of tra-2, for which it acts as a potentiator. Capable of calcium-dependent autolysis. Part of the necrosis cell death pathway. Required for necrosis of intestinal cells induced by B.thuringiensis endotoxin Cry6Aa. The chain is Calpain-5 from Caenorhabditis elegans.